Here is a 351-residue protein sequence, read N- to C-terminus: Tropomodulin-2 (351 aa).

Ser25 carries the post-translational modification Phosphoserine.

It belongs to the tropomodulin family. Binds to the N-terminus of tropomyosin and to actin. In terms of tissue distribution, neuronal-tissue specific.

It is found in the cytoplasm. The protein localises to the cytoskeleton. Functionally, blocks the elongation and depolymerization of the actin filaments at the pointed end. The Tmod/TM complex contributes to the formation of the short actin protofilament, which in turn defines the geometry of the membrane skeleton. The chain is Tropomodulin-2 (TMOD2) from Homo sapiens (Human).